A 482-amino-acid polypeptide reads, in one-letter code: BTB/POZ domain and ankyrin repeat-containing protein NOOT1 (482 aa).

One can recognise a BTB domain in the interval 25–107 (SDVVFSVEGR…LYSGQVSIVP (83 aa)). The C2HC NPR-type zinc-finger motif lies at 113–127 (RPNCGDRGCWHTHCT). Positions 116, 121, 123, and 126 each coordinate Zn(2+). 4 ANK repeats span residues 249–278 (QKIR…LNLD), 279–308 (EALA…DVNF), 313–342 (TGKT…DPNV), and 346–380 (DGVT…KLRL). Positions 395-434 (EEGNNNNSNNNNNATASSATNMYPHHNMNEDHHHSHNNNN) are disordered. Over residues 398–415 (NNNNSNNNNNATASSATN) the composition is skewed to low complexity.

This sequence belongs to the plant 'ANKYRIN-BTB/POZ' family. 'NOOT-BOP-COCH-like' (NBCL) subfamily. In terms of assembly, homodimer. As to expression, expressed in the shoot apical meristem (SAM) at the base of the developing leaf where stipules are formed. Associated with functional and vestigial abscission zones (AZs), including pulvini.

The protein localises to the nucleus. It localises to the cytoplasm. Its subcellular location is the cell membrane. It participates in protein modification; protein ubiquitination. Functionally, may act as a substrate-specific adapter of an E3 ubiquitin-protein ligase complex (CUL3-RBX1-BTB) which mediates the ubiquitination and subsequent proteasomal degradation of target proteins. Transcriptional co-regulator involved in the promotion of leaf and floral meristem fate and determinacy. Promotes normal stipule growth and development. Required for the abscission of senescent organs, probably by regulating the cell wall disorganization in abscission zones (AZs, e.g. pulvini at the base of leaves). Involved in the coordination of the symbiotic nodule developmental program. Promotes the formation of root nodules by interacting directly with APP1 to modulate the expression of the nuclear transcription factor Y subunit (NF-YA1), a key nodulin. Necessary for the robust maintenance of nodule identity throughout the nodule developmental program. Involved in the regulation of indeterminate nodule identity in association with NOOT2. In Medicago truncatula (Barrel medic), this protein is BTB/POZ domain and ankyrin repeat-containing protein NOOT1.